The following is a 224-amino-acid chain: MDVSAALSSDYSSGTPSPVAADADDGSSAYMTVSSAPPKRRAGRTKFKETRHPVFKGVRRRNPGRWVCEVREPHGKQRIWLGTFETAEMAARAHDVAALALRGRAACLNFADSPRRLRVPPIGASHDDIRRAAAEAAEAFRPPPDESNAATEVAAAASGATNSNAEQFASHPYYEVMDDGLDLGMQGYLDMAQGMLIDPPPMACDPAVGGGEDDNDGEVQLWSY.

Residues 1-16 (MDVSAALSSDYSSGTP) show a composition bias toward polar residues. The tract at residues 1–46 (MDVSAALSSDYSSGTPSPVAADADDGSSAYMTVSSAPPKRRAGRTK) is disordered. The segment at residues 54 to 111 (VFKGVRRRNPGRWVCEVREPHGKQRIWLGTFETAEMAARAHDVAALALRGRAACLNFA) is a DNA-binding region (AP2/ERF).

Belongs to the AP2/ERF transcription factor family. ERF subfamily.

It is found in the nucleus. In terms of biological role, transcriptional activator that binds specifically to the DNA sequence 5'-[AG]CCGAC-3'. Binding to the C-repeat/DRE element mediates high salinity- and dehydration-inducible transcription. The chain is Dehydration-responsive element-binding protein 1G (DREB1G) from Oryza sativa subsp. indica (Rice).